A 64-amino-acid polypeptide reads, in one-letter code: Large ribosomal subunit protein bL35 (64 aa).

The segment at 22 to 44 (IMKQQAGMRHNLEVKSSKRKARL) is disordered.

It belongs to the bacterial ribosomal protein bL35 family.

This Clavibacter sepedonicus (Clavibacter michiganensis subsp. sepedonicus) protein is Large ribosomal subunit protein bL35.